The sequence spans 611 residues: V-type proton ATPase catalytic subunit A (611 aa).

Residue 244–251 coordinates ATP; sequence GAFGCGKT.

The protein belongs to the ATPase alpha/beta chains family. In terms of assembly, V-ATPase is a heteromultimeric enzyme made up of two complexes: the ATP-hydrolytic V1 complex and the proton translocation V0 complex. The V1 complex consists of three catalytic AB heterodimers that form a heterohexamer, three peripheral stalks each consisting of EG heterodimers, one central rotor including subunits D and F, and the regulatory subunits C and H. The proton translocation complex V0 consists of the proton transport subunit a, a ring of proteolipid subunits c9c'', rotary subunit d and subunit e.

It is found in the cell membrane. Its subcellular location is the vacuole. The protein resides in the vesicle. The catalysed reaction is ATP + H2O + 4 H(+)(in) = ADP + phosphate + 5 H(+)(out). ATP hydrolysis occurs at the interface between the nucleotide-binding domains of subunits A and B. ATP hydrolysis triggers a conformational change in the subunits D and F, which induces a shift of subunit d. The c-ring is subsequently rotated and results in a continuous proton translocation across the membrane. Its function is as follows. Catalytic subunit of the V1 complex of vacuolar(H+)-ATPase (V-ATPase), a multisubunit enzyme composed of a peripheral complex (V1) that hydrolyzes ATP and a membrane integral complex (V0) that translocates protons. V-ATPase is responsible for acidifying and maintaining the pH of intracellular compartments and in some cell types, is targeted to the plasma membrane, where it is responsible for acidifying the extracellular environment. During the trophozoite stage, involved in the acidification of the extracellular space next to the cell membrane. This chain is V-type proton ATPase catalytic subunit A, found in Plasmodium falciparum (isolate 3D7).